The chain runs to 186 residues: ADP-ribosylation factor-like protein 6 (186 aa).

Residue glycine 2 is the site of N-myristoyl glycine attachment. Residues 24–31 (GLDNSGKT), threonine 50, 69–73 (DMSGQ), glycine 72, 130–133 (NKMD), and alanine 164 contribute to the GTP site. Threonine 50 serves as a coordination point for Mg(2+).

Belongs to the small GTPase superfamily. Arf family. As to quaternary structure, interacts with SEC61B, ARL6IP1, ARL6IP2, ARL6IP3, ARL6IP4 ARL6IP5 and ARL6IP6. Interacts (GTP-bound form) with the BBSome a complex that contains BBS1, BBS2, BBS4, BBS5, BBS7, BBS8/TTC8, BBS9 and BBIP10. Interacts (GTP-free form) with IFT27. As to expression, most abundant in brain and kidney. Expressed in heart and eye. Isoform 2 is expressed only in the retina.

It localises to the cell projection. It is found in the cilium membrane. The protein resides in the cytoplasm. Its subcellular location is the cytoskeleton. The protein localises to the cilium axoneme. It localises to the cilium basal body. Functionally, involved in membrane protein trafficking at the base of the ciliary organelle. Mediates recruitment onto plasma membrane of the BBSome complex which would constitute a coat complex required for sorting of specific membrane proteins to the primary cilia. Together with BBS1, is necessary for correct trafficking of PKD1 to primary cilia. Together with the BBSome complex and LTZL1, controls SMO ciliary trafficking and contributes to the sonic hedgehog (SHH) pathway regulation. May regulate cilia assembly and disassembly and subsequent ciliary signaling events such as the Wnt signaling cascade. Isoform 2 may be required for proper retinal function and organization. In Mus musculus (Mouse), this protein is ADP-ribosylation factor-like protein 6 (Arl6).